The sequence spans 101 residues: DET1- and DDB1-associated protein 1 (101 aa).

A disordered region spans residues 67–101; it reads NAAKKRDQDQLEIGETSAPPRKIARTDSQEMNEDT.

The protein belongs to the DDA1 family. In terms of assembly, component of numerous DCX (DDB1-CUL4-X-box) E3 ubiquitin-protein ligase complexes which consist of a core of DDB1, cullin-4 (CUL4A or CUL4B), DDA1 and RBX1.

The protein operates within protein modification; protein ubiquitination. Its function is as follows. Functions as a component of numerous distinct DCX (DDB1-CUL4-X-box) E3 ubiquitin-protein ligase complexes which mediate the ubiquitination and subsequent proteasomal degradation of target proteins. In the DCX complexes, acts as a scaffolding subunit required to stabilize the complex. This Xenopus laevis (African clawed frog) protein is DET1- and DDB1-associated protein 1.